The following is a 398-amino-acid chain: S-adenosylmethionine decarboxylase proenzyme (398 aa).

Catalysis depends on residues Glu-18 and Glu-21. The active-site Schiff-base intermediate with substrate; via pyruvic acid is the Ser-78. Pyruvic acid (Ser); by autocatalysis is present on Ser-78. The Proton donor; for catalytic activity role is filled by Cys-92. Residues Ser-243 and His-256 each act as proton acceptor; for processing activity in the active site.

It belongs to the eukaryotic AdoMetDC family. Pyruvate serves as cofactor. Post-translationally, is synthesized initially as an inactive proenzyme. Formation of the active enzyme involves a self-maturation process in which the active site pyruvoyl group is generated from an internal serine residue via an autocatalytic post-translational modification. Two non-identical subunits are generated from the proenzyme in this reaction, and the pyruvate is formed at the N-terminus of the alpha chain, which is derived from the carboxyl end of the proenzyme. The post-translation cleavage follows an unusual pathway, termed non-hydrolytic serinolysis, in which the side chain hydroxyl group of the serine supplies its oxygen atom to form the C-terminus of the beta chain, while the remainder of the serine residue undergoes an oxidative deamination to produce ammonia and the pyruvoyl group blocking the N-terminus of the alpha chain.

The catalysed reaction is S-adenosyl-L-methionine + H(+) = S-adenosyl 3-(methylsulfanyl)propylamine + CO2. Its pathway is amine and polyamine biosynthesis; S-adenosylmethioninamine biosynthesis; S-adenosylmethioninamine from S-adenosyl-L-methionine: step 1/1. The protein is S-adenosylmethionine decarboxylase proenzyme (SAMDC) of Oryza sativa subsp. indica (Rice).